The sequence spans 230 residues: Cytidylate kinase (230 aa).

Residue 12 to 20 (GPSGTGKST) participates in ATP binding.

This sequence belongs to the cytidylate kinase family. Type 1 subfamily.

The protein resides in the cytoplasm. It catalyses the reaction CMP + ATP = CDP + ADP. The enzyme catalyses dCMP + ATP = dCDP + ADP. In Corynebacterium glutamicum (strain ATCC 13032 / DSM 20300 / JCM 1318 / BCRC 11384 / CCUG 27702 / LMG 3730 / NBRC 12168 / NCIMB 10025 / NRRL B-2784 / 534), this protein is Cytidylate kinase.